Consider the following 397-residue polypeptide: Elongation factor Tu 1 (397 aa).

Residues 10-207 enclose the tr-type G domain; the sequence is KPHVNVGTIG…TLDSYIPEPV (198 aa). The interval 19-26 is G1; that stretch reads GHVDHGKT. A GTP-binding site is contributed by 19-26; it reads GHVDHGKT. Threonine 26 is a Mg(2+) binding site. The segment at 60 to 64 is G2; that stretch reads GITIN. The interval 81–84 is G3; sequence DCPG. GTP is bound by residues 81–85 and 136–139; these read DCPGH and NKAD. The tract at residues 136–139 is G4; that stretch reads NKAD. Positions 174–176 are G5; sequence SAL.

It belongs to the TRAFAC class translation factor GTPase superfamily. Classic translation factor GTPase family. EF-Tu/EF-1A subfamily. Monomer.

The protein resides in the cytoplasm. The catalysed reaction is GTP + H2O = GDP + phosphate + H(+). GTP hydrolase that promotes the GTP-dependent binding of aminoacyl-tRNA to the A-site of ribosomes during protein biosynthesis. The sequence is that of Elongation factor Tu 1 from Stutzerimonas stutzeri (strain A1501) (Pseudomonas stutzeri).